The sequence spans 448 residues: Keratin, type I cytoskeletal 27 (448 aa).

A head region spans residues 1-73; the sequence is MSVRFSSASR…ANEHGLLSGN (73 aa). The segment at 74–109 is coil 1A; that stretch reads EKVTMQNLNDRLASYLENVQALEEANADLEQKIKDW. One can recognise an IF rod domain in the interval 74–389; the sequence is EKVTMQNLND…RLIDGDEGSC (316 aa). The segment at 110–131 is linker 1; that stretch reads YEKFGPGSCRGLDHDYSRYFPI. A coil 1B region spans residues 132–223; the sequence is IDDLRTQIIS…KNHEEEMQAL (92 aa). Residues 224–246 form a linker 12 region; sequence QCAAGGNVNVEMNAAPGVDLTVL. Residues 247-385 form a coil 2 region; the sequence is LNNMRAEYEA…ETYCRLIDGD (139 aa). The tract at residues 386–448 is tail; that stretch reads EGSCVKAKGQ…VNKTEQRIPS (63 aa). The disordered stretch occupies residues 427-448; the sequence is SRVHTLEEKSTKVNKTEQRIPS. Over residues 430 to 448 the composition is skewed to basic and acidic residues; it reads HTLEEKSTKVNKTEQRIPS.

Belongs to the intermediate filament family. As to quaternary structure, heterotetramer of two type I and two type II keratins. Interacts with KRT6A to form filaments. In terms of tissue distribution, expressed in skin. Expressed in the Henle layer and cuticle of the irs in hair follicle bulb. In the hair follicle, expression was observed in all layers of the irs but was stronger in the Henle layer and cuticle than the Huxley layer until the Henle layer differentiated (at protein level).

The protein localises to the cytoplasm. Essential for the proper assembly of type I and type II keratin protein complexes and formation of keratin intermediate filaments in the inner root sheath (irs). The sequence is that of Keratin, type I cytoskeletal 27 from Mus musculus (Mouse).